The chain runs to 271 residues: 4-hydroxy-tetrahydrodipicolinate reductase (271 aa).

Residue 8 to 13 (GITGRM) participates in NAD(+) binding. Arg-35 contacts NADP(+). Residues 100–102 (GST) and 124–127 (APNM) contribute to the NAD(+) site. Residue His-157 is the Proton donor/acceptor of the active site. His-158 serves as a coordination point for (S)-2,3,4,5-tetrahydrodipicolinate. Lys-161 (proton donor) is an active-site residue. 167-168 (GT) is a (S)-2,3,4,5-tetrahydrodipicolinate binding site.

The protein belongs to the DapB family.

The protein resides in the cytoplasm. It carries out the reaction (S)-2,3,4,5-tetrahydrodipicolinate + NAD(+) + H2O = (2S,4S)-4-hydroxy-2,3,4,5-tetrahydrodipicolinate + NADH + H(+). The catalysed reaction is (S)-2,3,4,5-tetrahydrodipicolinate + NADP(+) + H2O = (2S,4S)-4-hydroxy-2,3,4,5-tetrahydrodipicolinate + NADPH + H(+). It functions in the pathway amino-acid biosynthesis; L-lysine biosynthesis via DAP pathway; (S)-tetrahydrodipicolinate from L-aspartate: step 4/4. Catalyzes the conversion of 4-hydroxy-tetrahydrodipicolinate (HTPA) to tetrahydrodipicolinate. The chain is 4-hydroxy-tetrahydrodipicolinate reductase from Myxococcus xanthus (strain DK1622).